The following is a 375-amino-acid chain: Queuine tRNA-ribosyltransferase (375 aa).

D89 (proton acceptor) is an active-site residue. Substrate contacts are provided by residues 89–93, D143, Q187, and G214; that span reads DSGGF. Positions 245-251 are RNA binding; it reads GVGKPED. D264 (nucleophile) is an active-site residue. An RNA binding; important for wobble base 34 recognition region spans residues 269 to 273; sequence TRNAR. Zn(2+)-binding residues include C302, C304, C307, and H333.

It belongs to the queuine tRNA-ribosyltransferase family. As to quaternary structure, homodimer. Within each dimer, one monomer is responsible for RNA recognition and catalysis, while the other monomer binds to the replacement base PreQ1. Zn(2+) serves as cofactor.

It catalyses the reaction 7-aminomethyl-7-carbaguanine + guanosine(34) in tRNA = 7-aminomethyl-7-carbaguanosine(34) in tRNA + guanine. It participates in tRNA modification; tRNA-queuosine biosynthesis. In terms of biological role, catalyzes the base-exchange of a guanine (G) residue with the queuine precursor 7-aminomethyl-7-deazaguanine (PreQ1) at position 34 (anticodon wobble position) in tRNAs with GU(N) anticodons (tRNA-Asp, -Asn, -His and -Tyr). Catalysis occurs through a double-displacement mechanism. The nucleophile active site attacks the C1' of nucleotide 34 to detach the guanine base from the RNA, forming a covalent enzyme-RNA intermediate. The proton acceptor active site deprotonates the incoming PreQ1, allowing a nucleophilic attack on the C1' of the ribose to form the product. After dissociation, two additional enzymatic reactions on the tRNA convert PreQ1 to queuine (Q), resulting in the hypermodified nucleoside queuosine (7-(((4,5-cis-dihydroxy-2-cyclopenten-1-yl)amino)methyl)-7-deazaguanosine). This Salmonella enteritidis PT4 (strain P125109) protein is Queuine tRNA-ribosyltransferase.